A 3106-amino-acid polypeptide reads, in one-letter code: Cilia- and flagella-associated protein 54 (3106 aa).

3 stretches are compositionally biased toward low complexity: residues 1–24, 34–48, and 2356–2368; these read MASSRSSSSSSEESPDSETSVSPV, STAVLKSPSESKSSS, and ESCSPTSPETSTT. Disordered regions lie at residues 1-58 and 2354-2374; these read MASS…THSE and PEESCSPTSPETSTTESKDDS.

The protein belongs to the CFAP54 family. In terms of tissue distribution, expressed at high level in the testis and at a low level in the lung and brain.

The protein localises to the cytoplasm. It is found in the cytoskeleton. The protein resides in the cilium axoneme. Functionally, required for assembly and function of cilia and flagella. The protein is Cilia- and flagella-associated protein 54 of Mus musculus (Mouse).